The primary structure comprises 534 residues: MGLSRAPWMGRVGGRGMMALLLAGLLLPGTLAKSIGTFSDPCKDPTRITSPNDPCLTGKGGSSGFSSYSGSSGSGSSISSASGSGGGSSGSSVAQGGSAGSFKPGTGYSQVSYSSGSGSSLQGASSSSQLGGSGSQPGSSGSQPGSSGSHSGSSGSNTGSSSSHSSSSSTFQFSSSSSQVGSGSALPTSDNAYRGILNPSQLGQSSSFSQTSGQRVSSNQRPCSSDIPDSPCSGGPIISHSGPYIPSSHSVSGGQRPVVVVVEQHGSGGPGVVQGLPCSNGGLPGKPCPPITSVDKSYGGYEVVGGSSDSYLVPGMTYSKGKIYPVGYFTKDNPVKGSPGVPSFAAGPPISEGKYFSSNPIIPSQSGASSVIAFQPVGTGGVQLCGGGSTGSKGPCSPFSSRVHSSSSISSSSGSPYHPCGSTSQSPCSPPGTGSFSSSSSSQSSGKIILQPCGSKSSSSGHPCMSVSSLTLTGDPDGSPHPDPSAGAKPCGSGSAGKIPCRSIRDILAQVKPLGPQLADPEVFLPQGELLDSP.

An N-terminal signal peptide occupies residues 1–32 (MGLSRAPWMGRVGGRGMMALLLAGLLLPGTLA). Disordered stretches follow at residues 38 to 252 (FSDP…HSVS) and 396 to 497 (CSPF…GSAG). Low complexity-rich tracts occupy residues 64–82 (GFSS…SSAS), 107–185 (GYSQ…SGSA), 200–236 (SQLG…SGGP), 397–415 (SPFS…SSGS), and 431–446 (PGTG…QSSG). Positions 454–472 (GSKSSSSGHPCMSVSSLTL) are enriched in polar residues.

It localises to the secreted. Its function is as follows. Important for the epidermal barrier integrity. The protein is Corneodesmosin (CDSN) of Macaca mulatta (Rhesus macaque).